The sequence spans 473 residues: P3 protein (473 aa).

Helical transmembrane passes span 25–45 (FVGMLGTALLFISLPWGAQVM), 221–241 (PMLLGLLGQFLVMPFYAFLMA), 249–269 (ALALGLIITCSSPGGGGSYLF), 277–297 (VTLAISMTFISTVAATGFLPL), 316–336 (ISKILGTLLFIAIPIAAGVVI), 356–376 (FILLLGGLFLAYHMGVFILVG), 381–401 (IVLVGFTVPLVGLLVGYSLAI), 413–433 (VSIEVGVQNSLLALAMLQLSL), and 446–466 (FIVALSGTSEMLALVIGQFIY).

Belongs to the bile acid:sodium symporter (BASS) (TC 2.A.28) family.

It is found in the membrane. In terms of biological role, the ubiquitous expression and the conservation of the sequence in distant animal species suggest that the gene codes for a protein with housekeeping functions. This Mus musculus (Mouse) protein is P3 protein (Slc10a3).